Here is a 377-residue protein sequence, read N- to C-terminus: Protein RecA (377 aa).

An ATP-binding site is contributed by 76-83 (GPESSGKT).

It belongs to the RecA family.

The protein resides in the cytoplasm. In terms of biological role, can catalyze the hydrolysis of ATP in the presence of single-stranded DNA, the ATP-dependent uptake of single-stranded DNA by duplex DNA, and the ATP-dependent hybridization of homologous single-stranded DNAs. It interacts with LexA causing its activation and leading to its autocatalytic cleavage. The chain is Protein RecA from Corynebacterium aurimucosum (strain ATCC 700975 / DSM 44827 / CIP 107346 / CN-1) (Corynebacterium nigricans).